The sequence spans 379 residues: Guanine nucleotide-binding protein G(s) subunit alpha (379 aa).

One can recognise a G-alpha domain in the interval 38 to 379 (STHRLLLLGA…RMHLRQYELL (342 aa)). Residues 41 to 54 (RLLLLGAGESGKST) are G1 motif. Residues 46-53 (GAGESGKS), 182-188 (LRCRVLT), 207-211 (DVGGQ), 276-279 (NKQD), and Ala351 each bind GTP. Residues Ser53 and Thr188 each coordinate Mg(2+). The interval 180–188 (DILRCRVLT) is G2 motif. The segment at 203-212 (FHMFDVGGQR) is G3 motif. The G4 motif stretch occupies residues 272-279 (ILFLNKQD). Positions 349–354 (TCAVDT) are G5 motif.

Belongs to the G-alpha family. G(s) subfamily. G proteins are composed of 3 units; alpha, beta and gamma. The alpha chain contains the guanine nucleotide binding site.

In terms of biological role, guanine nucleotide-binding proteins (G proteins) are involved as modulators or transducers in various transmembrane signaling systems. The G(s) protein is involved in hormonal regulation of adenylate cyclase: it activates the cyclase in response to beta-adrenergic stimuli. This is Guanine nucleotide-binding protein G(s) subunit alpha from Schistosoma mansoni (Blood fluke).